Here is an 886-residue protein sequence, read N- to C-terminus: MKAGRAFGCLFWALLYCVLYLDLVSGNSADDELMDFDFADSNDAAMEDWQLDDLEEAKKAEQAEKKLESNMLDFSVDLDEPEPEKQLPPFDWRERVLRNALAKALADEGLRQKFAEVLPILRMLSSQQRLALSALISAQMNAKKGHELKFEQVRMMFGNEKKLLLPIVFDIANLIKSSTRKYINLGSDLASSALYHTPINRREDDLTPEESQQDDQLGTIAVEVEPKKVSTEEVQLESLEDFFDEMGSEVLDPQMINEALTGDLHDNKTKTFKPENHGQRVRRSANEFVHKLTRSVPASVTEQQLLGGIAGRTIKLNTTAFQQPSSQEEEKMASSNGGQSYSEVEDLAFAGLNGTEIPLSADERLDLQRNSAEETEEPLPSPEELIAGPRYRLGKRPLPGQKSGSPIKRKRVTSSLRGRPKTAASSHKPVVTPPNKKCERFTSNMCIRTDDYPLEQIMGSIRRHKNAMSALLAEFYDKPNNNLEFSDDFDDFSLSKKRREDEGSAGGMCQSVVRYARPQKAKSASGEWKYIVNTGQHTQTLRLEKCSNPVESCSYLAQTYRSHCSQVYNYHRLLSWDKVRGLHVDIFKVPTCCSCQVDGYRQQFPPLSSIQAKDYSPQSPVINHSHNGYSTINEEDLDYAEESEEDELGLRYPSFNNRETNELYSSSNKVRVKLPGISSSVGPYLSPPDDDEDRYGGYKSSSSSSKKYYSQVSRRRPQHSEARLDLDLAPSETHSDQEPPPPQHHQHHHLQYHRPQEELPSAYDFHRPQVYQPEREQLPLVRDPALSPVSAPVLASPAPPLPMPPMPIKQVPSHHQAHHQQPHHHLHQSTGKVAANRDPASMHHQPPRRPTQQWLPGQRRPFRPSAPLSGSGISRRHYHNRRQSIQ.

The N-terminal stretch at 1 to 29 is a signal peptide; it reads MKAGRAFGCLFWALLYCVLYLDLVSGNSA. The propeptide occupies 30–498; sequence DDELMDFDFA…FDDFSLSKKR (469 aa). Asparagine 267 and asparagine 317 each carry an N-linked (GlcNAc...) asparagine glycan. A disordered region spans residues 321–340; it reads FQQPSSQEEEKMASSNGGQS. Asparagine 353 carries N-linked (GlcNAc...) asparagine glycosylation. The tract at residues 369 to 436 is disordered; the sequence is RNSAEETEEP…HKPVVTPPNK (68 aa). The 90-residue stretch at 508–597 folds into the Spaetzle domain; the sequence is MCQSVVRYAR…KVPTCCSCQV (90 aa). 3 disulfide bridges follow: cysteine 509/cysteine 564, cysteine 546/cysteine 593, and cysteine 553/cysteine 595. The N-linked (GlcNAc...) asparagine glycan is linked to asparagine 623. Disordered stretches follow at residues 675–754 and 789–886; these read PGIS…QYHR and VSAP…QSIQ. Residues 698–710 show a composition bias toward low complexity; sequence YKSSSSSSKKYYS. Over residues 797 to 807 the composition is skewed to pro residues; it reads PAPPLPMPPMP. Composition is skewed to basic residues over residues 815 to 827 and 874 to 886; these read HQAHHQQPHHHLH and SRRHYHNRRQSIQ.

Homodimer; disulfide-linked. In terms of tissue distribution, detected in the fan-shaped body which is a component of the locomotion center in the central nervous system (CNS) (at protein level). Expressed in the optic lobes and brain.

Functionally, neurotrophin which may function as a ligand for the Toll-related receptors Toll-7 and Tollo. Binds to Toll-7 and probably acts as its ligand in promoting motor axon targeting and neuronal survival in the central nervous system (CNS). Involved in synaptic targeting of ISNb/d motorneurons and also some SNa motorneurons. In larvae, involved in the negative regulation of the tracheal immune response to bacterial infection perhaps by acting as a ligand for the Toll-related receptor Tollo. May be involved in the normal development of specific neurons at the neuromuscular junction. The polypeptide is Neurotrophin 1 (Drosophila melanogaster (Fruit fly)).